Consider the following 32-residue polypeptide: Snake venom serine proteinase (32 aa).

Residues V1 to N32 enclose the Peptidase S1 domain.

Belongs to the peptidase S1 family. Snake venom subfamily. As to quaternary structure, monomer. Post-translationally, contains 6 disulfide bonds. In terms of processing, glycosylated. In terms of tissue distribution, expressed by the venom gland.

The protein resides in the secreted. Cleaves a kininogen analog with the release of kallidin (lysyl-bradykinin). Completely cleaves fibrinogen Aalpha chain, partially cleaves Bbeta chain and has no activity on gamma chain. The polypeptide is Snake venom serine proteinase (Bitis arietans (African puff adder)).